A 200-amino-acid chain; its full sequence is NAD(P)H dehydrogenase (quinone) (200 aa).

Residues 4–190 (VLVLYYSTYG…DGARFQGRLV (187 aa)) form the Flavodoxin-like domain. FMN is bound by residues 10–15 (STYGHL) and 78–80 (TRF). Tyrosine 12 contributes to the NAD(+) binding site. A substrate-binding site is contributed by tryptophan 98. FMN-binding positions include 113-119 (STATQHG) and histidine 134.

Belongs to the WrbA family. The cofactor is FMN.

It catalyses the reaction a quinone + NADH + H(+) = a quinol + NAD(+). The enzyme catalyses a quinone + NADPH + H(+) = a quinol + NADP(+). The sequence is that of NAD(P)H dehydrogenase (quinone) from Acidovorax ebreus (strain TPSY) (Diaphorobacter sp. (strain TPSY)).